A 206-amino-acid chain; its full sequence is Small ribosomal subunit protein uS4 (206 aa).

Residues 96-156 form the S4 RNA-binding domain; the sequence is GRLDNVVYRM…EKAKKQSRVK (61 aa).

Belongs to the universal ribosomal protein uS4 family. Part of the 30S ribosomal subunit. Contacts protein S5. The interaction surface between S4 and S5 is involved in control of translational fidelity.

Its function is as follows. One of the primary rRNA binding proteins, it binds directly to 16S rRNA where it nucleates assembly of the body of the 30S subunit. With S5 and S12 plays an important role in translational accuracy. This chain is Small ribosomal subunit protein uS4, found in Cronobacter sakazakii (strain ATCC BAA-894) (Enterobacter sakazakii).